Reading from the N-terminus, the 393-residue chain is Cytochrome b (393 aa).

4 consecutive transmembrane segments (helical) span residues 32–52, 76–98, 113–133, and 179–199; these read FGSL…TLAM, WLIR…LHMG, VWTL…LGYV, and FFAL…MHLI. Residues His-82 and His-96 each contribute to the heme b site. Positions 183 and 197 each coordinate heme b. An a ubiquinone-binding site is contributed by His-202. Transmembrane regions (helical) follow at residues 226–246, 290–310, 322–342, and 349–369; these read FIFK…IFVF, LLGV…PFTD, LSKI…KLGA, and FIEF…IIVP.

It belongs to the cytochrome b family. As to quaternary structure, fungal cytochrome b-c1 complex contains 10 subunits; 3 respiratory subunits, 2 core proteins and 5 low-molecular weight proteins. Cytochrome b-c1 complex is a homodimer. Heme b is required as a cofactor.

The protein localises to the mitochondrion inner membrane. Its function is as follows. Component of the ubiquinol-cytochrome c reductase complex (complex III or cytochrome b-c1 complex) that is part of the mitochondrial respiratory chain. The b-c1 complex mediates electron transfer from ubiquinol to cytochrome c. Contributes to the generation of a proton gradient across the mitochondrial membrane that is then used for ATP synthesis. The sequence is that of Cytochrome b (COB) from Venturia inaequalis (Apple scab fungus).